Consider the following 568-residue polypeptide: Sulfite reductase [NADPH] hemoprotein beta-component (568 aa).

Positions 426, 432, 471, and 475 each coordinate [4Fe-4S] cluster. Cys475 provides a ligand contact to siroheme.

The protein belongs to the nitrite and sulfite reductase 4Fe-4S domain family. As to quaternary structure, alpha(8)-beta(8). The alpha component is a flavoprotein, the beta component is a hemoprotein. Requires siroheme as cofactor. The cofactor is [4Fe-4S] cluster.

The enzyme catalyses hydrogen sulfide + 3 NADP(+) + 3 H2O = sulfite + 3 NADPH + 4 H(+). The protein operates within sulfur metabolism; hydrogen sulfide biosynthesis; hydrogen sulfide from sulfite (NADPH route): step 1/1. In terms of biological role, component of the sulfite reductase complex that catalyzes the 6-electron reduction of sulfite to sulfide. This is one of several activities required for the biosynthesis of L-cysteine from sulfate. In Xylella fastidiosa (strain M23), this protein is Sulfite reductase [NADPH] hemoprotein beta-component.